The chain runs to 212 residues: Claudin-7-A (212 aa).

The Cytoplasmic portion of the chain corresponds to 1–7; that stretch reads MANSGVQ. The helical transmembrane segment at 8-28 threads the bilayer; it reads LLGFGLSLIGIIGLIVGTILP. Over 29 to 81 the chain is Extracellular; it reads QWKMSAYVGDSIITAVATYQGLWMSCAFQSTGQLQCKIYDSILQLDSDLQATR. The helical transmembrane segment at 82–102 threads the bilayer; it reads ALMIVGIIVSIAGLGVASIGM. The Cytoplasmic segment spans residues 103–119; that stretch reads KCTTCGADDKVRKTRTA. A helical membrane pass occupies residues 120–140; that stretch reads MTGGIILLVGALCAVVACSWF. At 141-162 the chain is on the extracellular side; it reads AHNVIRAFYNPFTPVNTKFEFG. A helical transmembrane segment spans residues 163–183; that stretch reads AAIFIAWGGSFLDVLGGAMLA. Topologically, residues 184–212 are cytoplasmic; it reads ASCPRSKQVSKYPKSNSTRSANGSNKEYV. Residues 191–212 form a disordered region; the sequence is QVSKYPKSNSTRSANGSNKEYV.

Belongs to the claudin family.

The protein resides in the cell junction. It localises to the tight junction. It is found in the cell membrane. Functionally, plays a major role in tight junction-specific obliteration of the intercellular space. This Danio rerio (Zebrafish) protein is Claudin-7-A.